The following is a 329-amino-acid chain: Taste receptor type 2 member 134 (329 aa).

At 1–27 the chain is on the extracellular side; the sequence is MRCSLRGCVQGRGGKSGVSLSKFSPKK. A helical membrane pass occupies residues 28 to 48; it reads MSFFFIFMVIFCIQSLVALLQ. Over 49–68 the chain is Cytoplasmic; that stretch reads NGFLATVLGREWVRSQGLPA. Residues 69–89 traverse the membrane as a helical segment; it reads GDMIVACLAASRFCLHGVAIV. Over 90–121 the chain is Extracellular; the sequence is NNFLTFVKLWSQKIYFSVLWDFVNTVNFWCTT. Residues 122–142 traverse the membrane as a helical segment; that stretch reads WLAIFYCVKISSFSHPIFFWI. Residues 143–153 lie on the Cytoplasmic side of the membrane; it reads KWRISRSVPRL. A helical membrane pass occupies residues 154–174; it reads LLGSLVIGGLSAVSSATGNTI. Over 175-201 the chain is Extracellular; that stretch reads AFQMTACENYTLAYRTRAFYAYYFRCH. N-linked (GlcNAc...) asparagine glycosylation occurs at N183. Residues 202-222 form a helical membrane-spanning segment; that stretch reads AMLMWIIPFFLFLLSVILLMF. Over 223-251 the chain is Cytoplasmic; it reads SLYRHLEHMRYRRPWSHDYSTQAHTMALK. A helical membrane pass occupies residues 252-272; it reads SLAFFLVFYTSYVLFLVISVT. Over 273–282 the chain is Extracellular; it reads RVVNVHSSWH. The helical transmembrane segment at 283–303 threads the bilayer; sequence WAWEVITYMGILLHSTILTLS. The Cytoplasmic portion of the chain corresponds to 304-329; the sequence is NPKMRKALKIKFPDLCVARSQDKRRG.

The protein belongs to the G-protein coupled receptor T2R family. Expressed in tongue and gastrointestinal tract.

It localises to the membrane. Functionally, putative taste receptor which may play a role in the perception of bitterness. This chain is Taste receptor type 2 member 134, found in Rattus norvegicus (Rat).